The sequence spans 243 residues: Cysteine-rich secretory protein 2 (243 aa).

A signal peptide spans 1-21; the sequence is MALLPVLFLVTVLLPSLPAEG. Residues 41–169 enclose the SCP domain; it reads VNKHNELRKA…SLKYYYVCQY (129 aa). Cystine bridges form between Cys-189–Cys-196, Cys-192–Cys-201, Cys-205–Cys-238, Cys-214–Cys-232, and Cys-223–Cys-236. The ShKT domain occupies 205-238; it reads CQYQDLLSNCDSLKNTAGCEHELLKEKCKATCLC.

It belongs to the CRISP family. Interacts with NSUN4 isoform 3. Testis and epididymis.

The protein resides in the secreted. Functionally, may regulate some ion channels' activity and thereby regulate calcium fluxes during sperm capacitation. The chain is Cysteine-rich secretory protein 2 (CRISP2) from Homo sapiens (Human).